A 757-amino-acid chain; its full sequence is Xylosyl- and glucuronyltransferase LARGE1 (757 aa).

The Cytoplasmic segment spans residues 1 to 10; that stretch reads MLGMCRGRRK. A helical; Signal-anchor for type II membrane protein membrane pass occupies residues 11-31; that stretch reads FVAASLALIFIPALTWLYLSS. Residues 32 to 757 are Lumenal-facing; the sequence is ANITVKPLPL…LKYMTVDNNS (726 aa). Residues 50 to 82 adopt a coiled-coil conformation; it reads AVVGAAAEHQSLELRLRDVEEHNNALRREISRT. The segment at 76–127 is disordered; the sequence is RREISRTPRVPTHSSHPSSSRHGNQLHTHSTEEGTGDSEAKKGAAAGNSSDC. Residues 82–97 are compositionally biased toward low complexity; that stretch reads TPRVPTHSSHPSSSRH. Asn123 and Asn149 each carry an N-linked (GlcNAc...) asparagine glycan. Positions 139-414 are xylosyltransferase activity; it reads IHIAIVCAGY…FLEYDGNLLR (276 aa). Asp243 and Asp245 together coordinate Mn(2+). N-linked (GlcNAc...) asparagine glycosylation occurs at Asn273. The tract at residues 415–757 is glucuronyltransferase activity; that stretch reads RELFGCPSET…LKYMTVDNNS (343 aa). Residues Asp564 and Asp566 each contribute to the Mn(2+) site. N-linked (GlcNAc...) asparagine glycosylation is present at Asn738.

The protein in the C-terminal section; belongs to the glycosyltransferase 49 family. In the N-terminal section; belongs to the glycosyltransferase 8 family. Mn(2+) is required as a cofactor.

The protein localises to the golgi apparatus membrane. The catalysed reaction is 3-O-[beta-D-GlcA-(1-&gt;3)-beta-D-Xyl-(1-&gt;4)-Rib-ol-P-Rib-ol-P-3-beta-D-GalNAc-(1-&gt;3)-beta-D-GlcNAc-(1-&gt;4)-(O-6-P-alpha-D-Man)]-Thr-[protein] + UDP-alpha-D-xylose = 3-O-[alpha-D-Xyl-(1-&gt;3)-beta-D-GlcA-(1-&gt;4)-beta-D-Xyl-(1-&gt;4)-Rib-ol-P-Rib-ol-P-3-beta-D-GalNAc-(1-&gt;3)-beta-D-GlcNAc-(1-&gt;4)-(O-6-P-alpha-D-Man)]-Thr-[protein] + UDP + H(+). It carries out the reaction 3-O-{(1-&gt;[3)-alpha-D-Xyl-(1-&gt;3)-beta-D-GlcA-(1-&gt;](n)-4)-beta-D-Xyl-(1-&gt;4)-Rib-ol-P-Rib-ol-P-3-beta-D-GalNAc-(1-&gt;3)-beta-D-GlcNAc-(1-&gt;4)-O-6-P-alpha-D-Man}-L-Thr-[protein] + UDP-alpha-D-glucuronate = 3-O-{beta-D-GlcA-(1-&gt;[3)-alpha-D-Xyl-(1-&gt;3)-beta-D-GlcA-(1-&gt;](n)-4)-beta-D-Xyl-(1-&gt;4)-Rib-ol-P-Rib-ol-P-3-beta-D-GalNAc-(1-&gt;3)-beta-D-GlcNAc-(1-&gt;4)-O-6-P-alpha-D-Man}-L-Thr-[protein] + UDP + H(+). It catalyses the reaction 3-O-{beta-D-GlcA-(1-&gt;[3)-alpha-D-Xyl-(1-&gt;3)-beta-D-GlcA-(1-&gt;](n)-4)-beta-D-Xyl-(1-&gt;4)-Rib-ol-P-Rib-ol-P-3-beta-D-GalNAc-(1-&gt;3)-beta-D-GlcNAc-(1-&gt;4)-O-6-P-alpha-D-Man}-L-Thr-[protein] + UDP-alpha-D-xylose = 3-O-{(1-&gt;[3)-alpha-D-Xyl-(1-&gt;3)-beta-D-GlcA-(1-&gt;](n+1)-4)-beta-D-Xyl-(1-&gt;4)-Rib-ol-P-Rib-ol-P-3-beta-D-GalNAc-(1-&gt;3)-beta-D-GlcNAc-(1-&gt;4)-O-6-P-alpha-D-Man}-L-Thr-[protein] + UDP + H(+). It functions in the pathway protein modification; protein glycosylation. Bifunctional glycosyltransferase with both alpha-1,3-xylosyltransferase and beta-1,3-glucuronyltransferase activities involved in the maturation of alpha-dystroglycan (DAG1) by glycosylation leading to DAG1 binding to laminin G-like domain-containing extracellular proteins with high affinity. Elongates the glucuronyl-beta-1,4-xylose-beta disaccharide primer structure initiated by B4GAT1 by adding repeating units [-3-Xylose-alpha-1,3-GlcA-beta-1-] to produce a heteropolysaccharide. Requires the phosphorylation of core M3 (O-mannosyl trisaccharide) by POMK to elongate the glucuronyl-beta-1,4-xylose-beta disaccharide primer. Plays a key role in skeletal muscle function and regeneration. In Danio rerio (Zebrafish), this protein is Xylosyl- and glucuronyltransferase LARGE1.